Reading from the N-terminus, the 245-residue chain is MSQSTSVLRRNGFTFKQFFVAHDRCAMKVGTDGILLGAWAPVAGVKRCLDIGAGSGLLALMLAQRTDDSVMIDAVELESEAAAQAQENINQSPWAERINVHTADIQQWITQQTVRFDLIISNPPYYQQGVECSTPQREQARYTTTLDHPSLLTCAAECITEEGFFCVVLPEQIGNGFTELALSMGWHLRLRTDVAENEARLPHRVLLAFSPQAGECFSDRLVIRGPDQNYSEAYTALTQAFYLFM.

The protein belongs to the methyltransferase superfamily. tRNA (adenine-N(6)-)-methyltransferase family.

Its subcellular location is the cytoplasm. The enzyme catalyses adenosine(37) in tRNA1(Val) + S-adenosyl-L-methionine = N(6)-methyladenosine(37) in tRNA1(Val) + S-adenosyl-L-homocysteine + H(+). Specifically methylates the adenine in position 37 of tRNA(1)(Val) (anticodon cmo5UAC). This is tRNA1(Val) (adenine(37)-N6)-methyltransferase (yfiC) from Escherichia coli (strain K12).